The sequence spans 233 residues: Eosinophil granule major basic protein 1 (233 aa).

The first 15 residues, 1-15 (MKLLLLLALLLGAVS), serve as a signal peptide directing secretion. Positions 16 to 114 (TRHLKVDTSS…VKFFSRPGYK (99 aa)) are cleaved as a propeptide — acidic. The segment at 24–96 (SSLQSLRGEE…SELDVSPEDI (73 aa)) is disordered. Over residues 42-57 (AEGATREATAGALMPL) the composition is skewed to low complexity. Residues 58 to 93 (PEEEEMEGASGSEDDPEEEEEEEEEVEFSSELDVSP) are compositionally biased toward acidic residues. Positions 132–233 (WVCQRCYRGN…GKRRPFVCTY (102 aa)) constitute a C-type lectin domain. 2 disulfides stabilise this stretch: Cys134–Cys231 and Cys208–Cys223.

In terms of processing, nitrated.

The protein localises to the cytoplasmic granule. Its function is as follows. MBP may play some important roles in the allergic reactions and inflammations, since MBP is capable of releasing histamine from mast cells and damaging the epithelial cells of bronchial tubes. Antiparasitic and antibiotic. The sequence is that of Eosinophil granule major basic protein 1 (MBP1) from Cavia porcellus (Guinea pig).